Here is a 295-residue protein sequence, read N- to C-terminus: Keratin-like protein KRT222 (295 aa).

One can recognise an IF rod domain in the interval 1 to 150 (MELSQLLNEI…HLLEKEEIRY (150 aa)). Residues 2 to 150 (ELSQLLNEIR…HLLEKEEIRY (149 aa)) adopt a coiled-coil conformation.

This sequence belongs to the intermediate filament family.

The sequence is that of Keratin-like protein KRT222 (KRT222) from Homo sapiens (Human).